Here is a 74-residue protein sequence, read N- to C-terminus: Putative membrane protein insertion efficiency factor (74 aa).

This sequence belongs to the UPF0161 family.

It is found in the cell inner membrane. Could be involved in insertion of integral membrane proteins into the membrane. The sequence is that of Putative membrane protein insertion efficiency factor from Leptospira interrogans serogroup Icterohaemorrhagiae serovar copenhageni (strain Fiocruz L1-130).